Reading from the N-terminus, the 130-residue chain is Large ribosomal subunit protein bL12 (130 aa).

Belongs to the bacterial ribosomal protein bL12 family. In terms of assembly, homodimer. Part of the ribosomal stalk of the 50S ribosomal subunit. Forms a multimeric L10(L12)X complex, where L10 forms an elongated spine to which 2 to 4 L12 dimers bind in a sequential fashion. Binds GTP-bound translation factors.

Its function is as follows. Forms part of the ribosomal stalk which helps the ribosome interact with GTP-bound translation factors. Is thus essential for accurate translation. The polypeptide is Large ribosomal subunit protein bL12 (Synechococcus sp. (strain RCC307)).